The sequence spans 228 residues: Ribonuclease 3 (228 aa).

Positions 5–134 (RSKLEKDYGI…FLGALLLDKG (130 aa)) constitute an RNase III domain. Glutamate 47 is a Mg(2+) binding site. Aspartate 51 is an active-site residue. Residues aspartate 120 and glutamate 123 each coordinate Mg(2+). Glutamate 123 is a catalytic residue. A DRBM domain is found at 160–228 (DYKTSLQELL…AAKNALATLQ (69 aa)).

The protein belongs to the ribonuclease III family. Homodimer. Mg(2+) is required as a cofactor.

The protein resides in the cytoplasm. The catalysed reaction is Endonucleolytic cleavage to 5'-phosphomonoester.. Functionally, digests double-stranded RNA. Involved in the processing of primary rRNA transcript to yield the immediate precursors to the large and small rRNAs (23S and 16S). Processes some mRNAs, and tRNAs when they are encoded in the rRNA operon. Processes pre-crRNA and tracrRNA of type II CRISPR loci if present in the organism. This Streptococcus agalactiae serotype III (strain NEM316) protein is Ribonuclease 3.